Consider the following 58-residue polypeptide: Large ribosomal subunit protein bL33 (58 aa).

This sequence belongs to the bacterial ribosomal protein bL33 family.

The sequence is that of Large ribosomal subunit protein bL33 from Brachyspira hyodysenteriae (strain ATCC 49526 / WA1).